Reading from the N-terminus, the 448-residue chain is Homogentisate 1,2-dioxygenase (448 aa).

Catalysis depends on H302, which acts as the Proton acceptor. H345 and E351 together coordinate Fe cation. Homogentisate is bound by residues Y360 and H381. A Fe cation-binding site is contributed by H381.

This sequence belongs to the homogentisate dioxygenase family. In terms of assembly, hexamer; dimer of trimers. Fe cation serves as cofactor.

The enzyme catalyses homogentisate + O2 = 4-maleylacetoacetate + H(+). It participates in amino-acid degradation; L-phenylalanine degradation; acetoacetate and fumarate from L-phenylalanine: step 4/6. Its function is as follows. Involved in the catabolism of homogentisate (2,5-dihydroxyphenylacetate or 2,5-OH-PhAc), a central intermediate in the degradation of phenylalanine and tyrosine. Catalyzes the oxidative ring cleavage of the aromatic ring of homogentisate to yield maleylacetoacetate. The polypeptide is Homogentisate 1,2-dioxygenase (Ralstonia pickettii (strain 12J)).